A 412-amino-acid polypeptide reads, in one-letter code: Multifunctional CCA protein (412 aa).

ATP-binding residues include glycine 8 and arginine 11. CTP is bound by residues glycine 8 and arginine 11. Residues aspartate 21 and aspartate 23 each contribute to the Mg(2+) site. Residues arginine 91, arginine 137, and arginine 140 each contribute to the ATP site. Arginine 91, arginine 137, and arginine 140 together coordinate CTP. An HD domain is found at 225 to 326 (TGIHVMMVID…ADMLQATDAY (102 aa)).

It belongs to the tRNA nucleotidyltransferase/poly(A) polymerase family. Bacterial CCA-adding enzyme type 1 subfamily. As to quaternary structure, monomer. Can also form homodimers and oligomers. Mg(2+) serves as cofactor. Ni(2+) is required as a cofactor.

The catalysed reaction is a tRNA precursor + 2 CTP + ATP = a tRNA with a 3' CCA end + 3 diphosphate. It carries out the reaction a tRNA with a 3' CCA end + 2 CTP + ATP = a tRNA with a 3' CCACCA end + 3 diphosphate. Its function is as follows. Catalyzes the addition and repair of the essential 3'-terminal CCA sequence in tRNAs without using a nucleic acid template. Adds these three nucleotides in the order of C, C, and A to the tRNA nucleotide-73, using CTP and ATP as substrates and producing inorganic pyrophosphate. tRNA 3'-terminal CCA addition is required both for tRNA processing and repair. Also involved in tRNA surveillance by mediating tandem CCA addition to generate a CCACCA at the 3' terminus of unstable tRNAs. While stable tRNAs receive only 3'-terminal CCA, unstable tRNAs are marked with CCACCA and rapidly degraded. The chain is Multifunctional CCA protein from Nitrosomonas europaea (strain ATCC 19718 / CIP 103999 / KCTC 2705 / NBRC 14298).